Reading from the N-terminus, the 196-residue chain is ATP-dependent Clp protease proteolytic subunit (196 aa).

Residue Ser-98 is the Nucleophile of the active site. His-123 is an active-site residue.

It belongs to the peptidase S14 family. In terms of assembly, fourteen ClpP subunits assemble into 2 heptameric rings which stack back to back to give a disk-like structure with a central cavity, resembling the structure of eukaryotic proteasomes.

It localises to the cytoplasm. It catalyses the reaction Hydrolysis of proteins to small peptides in the presence of ATP and magnesium. alpha-casein is the usual test substrate. In the absence of ATP, only oligopeptides shorter than five residues are hydrolyzed (such as succinyl-Leu-Tyr-|-NHMec, and Leu-Tyr-Leu-|-Tyr-Trp, in which cleavage of the -Tyr-|-Leu- and -Tyr-|-Trp bonds also occurs).. Its function is as follows. Cleaves peptides in various proteins in a process that requires ATP hydrolysis. Has a chymotrypsin-like activity. Plays a major role in the degradation of misfolded proteins. The sequence is that of ATP-dependent Clp protease proteolytic subunit from Geobacillus sp. (strain WCH70).